A 249-amino-acid chain; its full sequence is Probable transcriptional regulatory protein CYA_2259 (249 aa).

It belongs to the TACO1 family.

It is found in the cytoplasm. The protein is Probable transcriptional regulatory protein CYA_2259 of Synechococcus sp. (strain JA-3-3Ab) (Cyanobacteria bacterium Yellowstone A-Prime).